The sequence spans 387 residues: Prostatic acid phosphatase (387 aa).

The signal sequence occupies residues 1-34 (MRNAALLMTRATSLRLSLLLLLSFLPDLDGGVRA). A substrate-binding site is contributed by R45. Catalysis depends on H46, which acts as the Nucleophile. A substrate-binding site is contributed by R49. N96 is a glycosylation site (N-linked (GlcNAc...) asparagine). Substrate is bound at residue R113. 3 cysteine pairs are disulfide-bonded: C163/C374, C217/C315, and C349/C353. Residue N222 is glycosylated (N-linked (GlcNAc...) asparagine). H291 contacts substrate. D292 serves as the catalytic Proton donor. N-linked (GlcNAc...) asparagine glycosylation is present at N335.

It belongs to the histidine acid phosphatase family. Homodimer; dimer formation is required for phosphatase activity.

It localises to the secreted. It catalyses the reaction a phosphate monoester + H2O = an alcohol + phosphate. The enzyme catalyses 1-(9Z-octadecenoyl)-sn-glycero-3-phosphate + H2O = 1-(9Z-octadecenoyl)-sn-glycerol + phosphate. It carries out the reaction O-phospho-L-tyrosyl-[protein] + H2O = L-tyrosyl-[protein] + phosphate. Functionally, a non-specific tyrosine phosphatase that dephosphorylates a diverse number of substrates under acidic conditions (pH 4-6) including alkyl, aryl, and acyl orthophosphate monoesters and phosphorylated proteins. Has lipid phosphatase activity and inactivates lysophosphatidic acid in seminal plasma. In Bos taurus (Bovine), this protein is Prostatic acid phosphatase (ACP3).